A 622-amino-acid chain; its full sequence is Low affinity potassium transport system protein Kup (622 aa).

The next 12 membrane-spanning stretches (helical) occupy residues 9-29 (LPAI…TSPL), 49-69 (VFGF…IKYL), 103-123 (VIMG…TPAI), 137-157 (PQLD…LFMI), 165-185 (VGKL…GLGL), 213-233 (VSFI…ALYA), 247-267 (WFTV…ALLL), 276-296 (PFFL…AALA), 337-357 (IYIP…IVSF), 363-383 (LAAA…ILST), 396-416 (FVAL…TANL), and 419-439 (LLSG…VMTT).

The protein belongs to the HAK/KUP transporter (TC 2.A.72) family.

It is found in the cell inner membrane. It catalyses the reaction K(+)(in) + H(+)(in) = K(+)(out) + H(+)(out). In terms of biological role, responsible for the low-affinity transport of potassium into the cell. Likely operates as a K(+):H(+) symporter. The chain is Low affinity potassium transport system protein Kup from Shigella flexneri serotype 5b (strain 8401).